The following is a 372-amino-acid chain: Probable peptidoglycan glycosyltransferase FtsW (372 aa).

The Cytoplasmic portion of the chain corresponds to 1 to 12 (MQKKSTISWSYD). The chain crosses the membrane as a helical span at residues 13-33 (AWIVICTLSLLALGLLMVASA). Residues 34-45 (SMVISDRQFGYP) are Periplasmic-facing. The helical transmembrane segment at 46–66 (FHYFIRHLIYLSLGLTLAWVA) threads the bilayer. The Cytoplasmic segment spans residues 67-77 (SRVPIKVWKTY). The chain crosses the membrane as a helical span at residues 78-98 (SGYLFLVGFLLLILVLAPVIG). At 99 to 109 (KTVNGSRRWIQ) the chain is on the periplasmic side. A helical membrane pass occupies residues 110-130 (LGFISLQVSEVVKFVTILYLA). Topologically, residues 131-142 (SFLQRYQSEVQK) are cytoplasmic. A helical transmembrane segment spans residues 143–163 (ELKGFLKPMLLVGILSGLLLL). At 164–165 (EP) the chain is on the periplasmic side. A helical membrane pass occupies residues 166–186 (DFGAAVVITMTCLALLFLAGV). Position 187 (Arg187) is a topological domain, cytoplasmic. A helical transmembrane segment spans residues 188 to 208 (LWPFCVLLVLVAGSLILLAIL). Topologically, residues 209 to 277 (SPYRLQRLTS…LFAVLAEELG (69 aa)) are periplasmic. A helical membrane pass occupies residues 278 to 298 (LIGEILLMGLFVLLIGRIILI). Topologically, residues 299-315 (GRRAENSNQLYSAYLAY) are cytoplasmic. The chain crosses the membrane as a helical span at residues 316-336 (GIALWLGLQVIINIGVTAGVL). The Periplasmic portion of the chain corresponds to 337-342 (PTKGLT). A helical membrane pass occupies residues 343-363 (LPFISYGGSSLLMNCLAIGVI). Over 364 to 372 (LRIAYETEN) the chain is Cytoplasmic.

This sequence belongs to the SEDS family. FtsW subfamily.

The protein resides in the cell inner membrane. The catalysed reaction is [GlcNAc-(1-&gt;4)-Mur2Ac(oyl-L-Ala-gamma-D-Glu-L-Lys-D-Ala-D-Ala)](n)-di-trans,octa-cis-undecaprenyl diphosphate + beta-D-GlcNAc-(1-&gt;4)-Mur2Ac(oyl-L-Ala-gamma-D-Glu-L-Lys-D-Ala-D-Ala)-di-trans,octa-cis-undecaprenyl diphosphate = [GlcNAc-(1-&gt;4)-Mur2Ac(oyl-L-Ala-gamma-D-Glu-L-Lys-D-Ala-D-Ala)](n+1)-di-trans,octa-cis-undecaprenyl diphosphate + di-trans,octa-cis-undecaprenyl diphosphate + H(+). Its pathway is cell wall biogenesis; peptidoglycan biosynthesis. Its function is as follows. Peptidoglycan polymerase that is essential for cell division. The protein is Probable peptidoglycan glycosyltransferase FtsW of Coxiella burnetii (strain RSA 493 / Nine Mile phase I).